A 95-amino-acid polypeptide reads, in one-letter code: MSTHNNSPKEKPVDMNNISEKLDVVNNAPEKPAGANHIPEKSAEMTSSEWIAEYWKGINRGNDVPCCCPRKMTSVDKKFSVFGKGYLMRSMQKDD.

This sequence belongs to the asfivirus DP96R family.

This is an uncharacterized protein from African swine fever virus (isolate Warthog/Namibia/Wart80/1980) (ASFV).